Reading from the N-terminus, the 168-residue chain is DOMON domain-containing protein CBG21753 (168 aa).

A signal peptide spans M1–A17. One can recognise a DOMON domain in the interval S25–G143. 2 N-linked (GlcNAc...) asparagine glycosylation sites follow: N35 and N94. Positions G148–N168 are disordered. Residues S156–N168 show a composition bias toward basic and acidic residues.

The protein localises to the secreted. This Caenorhabditis briggsae protein is DOMON domain-containing protein CBG21753.